The chain runs to 759 residues: Na(+)/H(+) exchanger beta (759 aa).

Residues 1–14 (MPAFSCAFPGCRRD) are Cytoplasmic-facing. A helical transmembrane segment spans residues 15 to 34 (LLVIVLVVFVGIGLPIEASA). Residues 35–75 (PAYQSHGTEGSHLTNITNTKKAFPVLAVNYEHVRKPFEIAL) are Extracellular-facing. N-linked (GlcNAc...) asparagine glycosylation occurs at Asn49. A helical membrane pass occupies residues 76–95 (WILLALLMKLGFHLIPRLSA). Residues 96-97 (VV) lie on the Cytoplasmic side of the membrane. Residues 98 to 117 (PESCLLIVVGLLVGGLIKVI) form a helical membrane-spanning segment. Over 118–122 (GEEPP) the chain is Extracellular. Residues 123 to 142 (VLDSQLFFLCLLPPIILDAG) form a helical membrane-spanning segment. The Cytoplasmic portion of the chain corresponds to 143-149 (YFLPIRP). Residues 150 to 169 (FTENVGTILVFAVIGTLWNA) traverse the membrane as a helical segment. Over 170–195 (FFMGGLLYALCQIESVGLSGVDLLAC) the chain is Extracellular. The chain crosses the membrane as a helical span at residues 196-214 (LLFGSIVSAVDPVAVLAVF). Residues 215 to 225 (EEIHINELVHI) are Cytoplasmic-facing. A helical membrane pass occupies residues 226–244 (LVFGESLLNDAVTVVLYNL). Over 245–261 (FEEFSKVGTVTVLDVFL) the chain is Extracellular. Residues 262–282 (GVVCFFVVSLGGVLVGAIYGF) traverse the membrane as a helical segment. Topologically, residues 283 to 311 (LAAFTSRFTSHTRVIEPLFVFLYSYMAYL) are cytoplasmic. The helical transmembrane segment at 312 to 330 (SSEMFHLSGIMALIACGVV) threads the bilayer. Over 331–352 (MRPYVEANISHKSYTTIKYFLK) the chain is Extracellular. Asn338 carries N-linked (GlcNAc...) asparagine glycosylation. Residues 353-372 (MWSSVSETLIFIFLGVSTVA) traverse the membrane as a helical segment. Residues 373–376 (GPHA) lie on the Cytoplasmic side of the membrane. Residues 377-398 (WNWTFVITTVILCLVSRVLGVI) form a helical membrane-spanning segment. Over 399-446 (GLTFIINKFRIVKLTKKDQFIVAYGGLRGAIAFSLGYLLSNSHQMRNL) the chain is Extracellular. A helical membrane pass occupies residues 447–467 (FLTAIITVIFFTVFVQGMTIR). Residues 468–759 (PLVELLAVKK…KEDDDPFMSC (292 aa)) lie on the Cytoplasmic side of the membrane. 2 positions are modified to phosphoserine; by PKA: Ser641 and Ser648. Residues 681–759 (FPTVHFEQPS…KEDDDPFMSC (79 aa)) are disordered. Residues 707–719 (VPKRPSLKADIEG) show a composition bias toward basic and acidic residues.

Belongs to the monovalent cation:proton antiporter 1 (CPA1) transporter (TC 2.A.36) family. Post-translationally, activated by cAMP, protein kinase A and protein kinase C.

Its subcellular location is the basolateral cell membrane. Its function is as follows. Involved in pH regulation to eliminate acids generated by active metabolism or to counter adverse environmental conditions. Major proton extruding system driven by the inward sodium ion chemical gradient. The chain is Na(+)/H(+) exchanger beta from Oncorhynchus mykiss (Rainbow trout).